The chain runs to 142 residues: Large ribosomal subunit protein uL13 (142 aa).

Belongs to the universal ribosomal protein uL13 family. In terms of assembly, part of the 50S ribosomal subunit.

Functionally, this protein is one of the early assembly proteins of the 50S ribosomal subunit, although it is not seen to bind rRNA by itself. It is important during the early stages of 50S assembly. In Xanthomonas oryzae pv. oryzae (strain MAFF 311018), this protein is Large ribosomal subunit protein uL13.